A 122-amino-acid polypeptide reads, in one-letter code: Small ribosomal subunit protein bS6 (122 aa).

Belongs to the bacterial ribosomal protein bS6 family.

Binds together with bS18 to 16S ribosomal RNA. In Vibrio cholerae serotype O1 (strain ATCC 39541 / Classical Ogawa 395 / O395), this protein is Small ribosomal subunit protein bS6.